We begin with the raw amino-acid sequence, 360 residues long: Ubiquitin carboxyl-terminal hydrolase MIY1 (360 aa).

The active-site Nucleophile is cysteine 28. The active-site Proton acceptor is the histidine 216. Residues 317–360 (KRKIHSHKKNSEIHAPVKKDKFKRRSSLLNAKASEKEKSECVVM) are disordered. 2 stretches are compositionally biased toward basic and acidic residues: residues 325 to 335 (KNSEIHAPVKK) and 349 to 360 (ASEKEKSECVVM).

Belongs to the MINDY deubiquitinase family. FAM63 subfamily.

It is found in the cytoplasm. The enzyme catalyses Thiol-dependent hydrolysis of ester, thioester, amide, peptide and isopeptide bonds formed by the C-terminal Gly of ubiquitin (a 76-residue protein attached to proteins as an intracellular targeting signal).. Functionally, hydrolase that can specifically remove 'Lys-48'-linked conjugated ubiquitin from proteins. Has endodeubiquitinase activity. In Saccharomyces cerevisiae (strain ATCC 204508 / S288c) (Baker's yeast), this protein is Ubiquitin carboxyl-terminal hydrolase MIY1.